We begin with the raw amino-acid sequence, 92 residues long: MIKYGVTIYVYGRVQGVGFRYQTFRWAKLNRLTGYVCNLHDGSVKIVAYGDSEQLNTLTHWLEQGGPPGARIDNFSSQSCAVEDIADFIVRH.

The Acylphosphatase-like domain occupies 5 to 92; the sequence is GVTIYVYGRV…EDIADFIVRH (88 aa). Active-site residues include arginine 20 and asparagine 38.

The protein belongs to the acylphosphatase family.

The enzyme catalyses an acyl phosphate + H2O = a carboxylate + phosphate + H(+). The sequence is that of Acylphosphatase (acyP) from Photorhabdus laumondii subsp. laumondii (strain DSM 15139 / CIP 105565 / TT01) (Photorhabdus luminescens subsp. laumondii).